Here is a 591-residue protein sequence, read N- to C-terminus: Metalloendopeptidase OPG085 (591 aa).

His-41 contacts Zn(2+). Glu-44 is a catalytic residue. Residues His-45 and Glu-112 each contribute to the Zn(2+) site.

Belongs to the peptidase M44 family. Zn(2+) is required as a cofactor. Post-translationally, undergoes proteolytic processing during the course of infection. May be cleaved into 46 kDa and 22 kDa products (Potential).

It localises to the virion. In terms of biological role, probably involved in maturation of some viral proteins by processing them preferentially at Ala-Gly-|-Ser/Thr/Lys motifs. Does not seem to be responsible for the cleavage of major core proteins. This is Metalloendopeptidase OPG085 (OPG085) from Homo sapiens (Human).